Here is a 262-residue protein sequence, read N- to C-terminus: MTRIHPTAIVEPGAQIDESVEIGPYAIVGPHVTIGARTTIGSHSVIEGHTTLGEDNRIGHYASVGGRPQDMKYKDEPTKLVIGNRNTIREFTTIHTGTVQDVGVTTLGDDNWIMAYVHIGHDCRVGNNVILSSNAQMAGHVEIGDYAIIGGMSGVHQFVRIGAHSMLGGASALVQDVPPFVIAAGNKAEPHGINVEGLRRRGFSPDAISALRSAYRLLYKNGLSLEEAKVQLRELAVAGGEGDAAVTAFVEFIDASQRGIIR.

It belongs to the transferase hexapeptide repeat family. LpxA subfamily. Homotrimer.

The protein resides in the cytoplasm. It catalyses the reaction a (3R)-hydroxyacyl-[ACP] + UDP-N-acetyl-alpha-D-glucosamine = a UDP-3-O-[(3R)-3-hydroxyacyl]-N-acetyl-alpha-D-glucosamine + holo-[ACP]. Its pathway is glycolipid biosynthesis; lipid IV(A) biosynthesis; lipid IV(A) from (3R)-3-hydroxytetradecanoyl-[acyl-carrier-protein] and UDP-N-acetyl-alpha-D-glucosamine: step 1/6. In terms of biological role, involved in the biosynthesis of lipid A, a phosphorylated glycolipid that anchors the lipopolysaccharide to the outer membrane of the cell. The protein is Acyl-[acyl-carrier-protein]--UDP-N-acetylglucosamine O-acyltransferase of Burkholderia ambifaria (strain MC40-6).